The primary structure comprises 239 residues: Small ribosomal subunit protein uS2 (239 aa).

Belongs to the universal ribosomal protein uS2 family.

The sequence is that of Small ribosomal subunit protein uS2 from Lysinibacillus sphaericus (strain C3-41).